The chain runs to 198 residues: Phomoidride biosynthesis cluster protein N (198 aa).

An N-terminal signal peptide occupies residues 1–18 (MILFSIFVALLAATRAQS). N-linked (GlcNAc...) asparagine glycosylation occurs at N93.

It belongs to the tstN family.

In terms of biological role, phosphatidylethanolamine-binding protein; part of the gene cluster that mediates the biosynthesis of the antihypercholesterolemic agents phomoidrides which are dimeric anhydrides. Within the pathway, tstNB is not essential for dimerization and its function has still to be determined. The pathway begins with the highly reducing polyketide synthase tstA that catalyzes the formation of a C12-fatty acyl-ACP, starting from one acetate and 5 malonate units. The hydrolase tstM is involved in the release of the C12-fatty acyl chain from phiA. The alkylcitrate synthase (ACS) tstJ and the alkylcitrate dehydratase (ACDH) tstI then give rise to decarboxylated monomeric anhydrides by coupling the C12-fatty acyl chain with oxalacetic acid. The cyclase tstC is responsible for the dimerization of the monomeric anhydrides which leads to the production of prephomoidride that contains the characteristic bicyclo[4.3.1]deca-1,6-diene system of phomoidrides. Iterative oxidation catalyzed by the alpha-ketoglutarate-dependent dioxygenase tstK produced then phomoidride A. Finally, the methyltransferase tstE converts phomoidride A to phomoidride B via an acetalization reaction. The phosphatidylethanolamine-binding protein tstB and tstN are not essential for dimerization and their functions have still to be determined. The polypeptide is Phomoidride biosynthesis cluster protein N (Talaromyces stipitatus (strain ATCC 10500 / CBS 375.48 / QM 6759 / NRRL 1006) (Penicillium stipitatum)).